Consider the following 543-residue polypeptide: Protein SGE1 (543 aa).

The Cytoplasmic portion of the chain corresponds to 1 to 8 (MKSTLSLT). A helical transmembrane segment spans residues 9-29 (LCVISLLLTLFLAALDIVIVV). At 30-41 (TLYDTIGIKFHD) the chain is on the extracellular side. A helical transmembrane segment spans residues 42–62 (FGNIGWLVTGYALSNAVFMLL). Residues 63–79 (WGRLAEILGTKECLMIS) lie on the Cytoplasmic side of the membrane. Residues 80–100 (VIVFEIGSLISALSNSMATLI) traverse the membrane as a helical segment. Topologically, residues 101-103 (SGR) are extracellular. A helical transmembrane segment spans residues 104 to 124 (VVAGFGGSGIESLAFVVGTSI). Residues 125 to 131 (VRENHRG) are Cytoplasmic-facing. A helical membrane pass occupies residues 132 to 152 (IMITALAISYVIAEGVGPFIG). Over 153–162 (GAFNEHLSWR) the chain is Extracellular. Residues 163–183 (WCFYINLPIGAFAFIILAFCN) traverse the membrane as a helical segment. The Cytoplasmic portion of the chain corresponds to 184–227 (TSGEPHQKMWLPSKIKKIMNYDYGELLKASFWKNTFEVLVFKLD). A helical membrane pass occupies residues 228–248 (MVGIILSSAGFTLLMLGLSFG). Residues 249 to 255 (GNNFPWN) are Extracellular-facing. The chain crosses the membrane as a helical span at residues 256–276 (SGIIICFFTVGPILLLLFCAY). Residues 277-300 (DFHFLSLSGLHYDNKRIKPLLTWN) lie on the Cytoplasmic side of the membrane. A helical transmembrane segment spans residues 301-321 (IASNCGIFTSSITGFLSCFAY). The Extracellular segment spans residues 322–341 (ELQSAYLVQLYQLVFKKKPT). Residues 342–362 (LASIHLWELSIPAMIATMAIA) form a helical membrane-spanning segment. Residues 363-373 (YLNSKYGIIKP) are Cytoplasmic-facing. A helical transmembrane segment spans residues 374–394 (AIVFGVLCGIVGSGLFTLING). At 395–399 (ELSQS) the chain is on the extracellular side. Residues 400–420 (IGYSILPGIAFGSIFQATLLS) traverse the membrane as a helical segment. Topologically, residues 421–443 (SQVQITSDDPDFQNKFIEVTAFN) are cytoplasmic. A helical transmembrane segment spans residues 444–464 (SFAKSLGFAFGGNMGAMIFTA). Residues 465 to 508 (SLKNQMRSSQLNIPQFTSVETLLAYSTEHYDGPQSSLSKFINTA) are Extracellular-facing. A helical membrane pass occupies residues 509–529 (IHDVFYCALGCYALSFFFGIF). The Cytoplasmic portion of the chain corresponds to 530 to 543 (TSSKKTTISAKKQQ).

It belongs to the major facilitator superfamily.

Its subcellular location is the membrane. Drug export permease. Multi-copy suppressor of loss-of-function mutation of GAL11. Involved specifically in transcription of GAL4-dependent genes. Can link GAL4 with the basal transcription machinery if GAL11 is missing. Confers resistance to 10-N-nonyl acridine orange (NAO) and in general to cationic dyes. The protein is Protein SGE1 (SGE1) of Saccharomyces cerevisiae (strain ATCC 204508 / S288c) (Baker's yeast).